We begin with the raw amino-acid sequence, 418 residues long: UPF0261 protein BRA1168/BS1330_II1159 (418 aa).

It belongs to the UPF0261 family.

The chain is UPF0261 protein BRA1168/BS1330_II1159 from Brucella suis biovar 1 (strain 1330).